The primary structure comprises 242 residues: Venom nerve growth factor 1 (242 aa).

The N-terminal stretch at 1-18 is a signal peptide; sequence MSMLCYTLIIAFLIGIWA. A propeptide spanning residues 19-125 is cleaved from the precursor; sequence APQSEDNVPL…ALNRNIQAKR (107 aa). 3 disulfide bridges follow: Cys139–Cys203, Cys181–Cys231, and Cys191–Cys233.

It belongs to the NGF-beta family. In terms of assembly, homodimer; non-covalently linked. As to expression, expressed by the venom gland.

The protein localises to the secreted. In terms of biological role, nerve growth factor is important for the development and maintenance of the sympathetic and sensory nervous systems. It stimulates division and differentiation of sympathetic and embryonic sensory neurons as well as basal forebrain cholinergic neurons in the brain. Its relevance in the snake venom is not clear. However, it has been shown to inhibit metalloproteinase-dependent proteolysis of platelet glycoprotein Ib alpha, suggesting a metalloproteinase inhibition to prevent metalloprotease autodigestion and/or protection against prey proteases. Binds a lipid between the two protein chains in the homodimer. The lipid-bound form promotes histamine relase from mouse mast cells, contrary to the lipid-free form. The protein is Venom nerve growth factor 1 of Pseudechis australis (Mulga snake).